Consider the following 501-residue polypeptide: MVKIRPDEISNIIRQQIEQYSQEVKVVSVGTVLQVGDGIARIYGLEKVMAGELLEFEDGTVGIALNLEADNVGAVLMGSGLSIQEGSAVKATGKIAQVPVGEAFLGRVVNALARPIDGKGDIASKESRLLEGPAPGIIERRSVYEPMQTGLIAIDAMIPIGRGQRELIIGDRQTGKTAIATDAIVNQKGSGVICVYVAIGQKASSVAQIVTTLQEKDAMRYTIIVSETADSPATLQYLAPYTGAALAEYFMYSGRHTLVIYDDLSKQAQAYREMSLLLRRPPGREAYPGDVFYLHSRLLERAAKLSDALGEGSMTALPVIETQGGDVSAYIPTNVISITDGQIFLSADIFNAGIRPAINVGISVSRVGSAAQVKAMKQVASKLKLELAQFSELEAFAQFSSDLDAATQAQLARGVRLRELLKQAQSEPLSVADQVATIYTGTNGYLDDLAPTQVRAFLSALRSYLATSKPKYAQIMAANVFTPEAESLVKEAIAETKASFK.

170–177 contacts ATP; it reads GDRQTGKT.

The protein belongs to the ATPase alpha/beta chains family. F-type ATPases have 2 components, CF(1) - the catalytic core - and CF(0) - the membrane proton channel. CF(1) has five subunits: alpha(3), beta(3), gamma(1), delta(1), epsilon(1). CF(0) has four main subunits: a, b, b' and c.

It is found in the plastid. Its subcellular location is the chloroplast thylakoid membrane. The enzyme catalyses ATP + H2O + 4 H(+)(in) = ADP + phosphate + 5 H(+)(out). Produces ATP from ADP in the presence of a proton gradient across the membrane. The alpha chain is a regulatory subunit. This chain is ATP synthase subunit alpha, chloroplastic, found in Nephroselmis olivacea (Green alga).